The chain runs to 517 residues: 3-hydroxyphenylacetate 6-hydroxylase (517 aa).

A heme-binding site is contributed by cysteine 449.

Belongs to the cytochrome P450 family.

It catalyses the reaction 3-hydroxyphenylacetate + NADH + O2 + H(+) = homogentisate + NAD(+) + H2O. It carries out the reaction 3-hydroxyphenylacetate + NADPH + O2 + H(+) = homogentisate + NADP(+) + H2O. The enzyme catalyses 3,4-dihydroxyphenylacetate + NADH + O2 + H(+) = 2,4,5-trihydroxyphenylacetate + NAD(+) + H2O. The catalysed reaction is 3,4-dihydroxyphenylacetate + NADPH + O2 + H(+) = 2,4,5-trihydroxyphenylacetate + NADP(+) + H2O. It functions in the pathway aromatic compound metabolism; phenylacetate degradation. Functionally, catalyzes the hydroxylation of 3-hydroxyphenylacetate and 3,4-dihydroxyphenylacetate to 2,5-dihydroxyphenylacetate (homogentisate) and 2,4,5-trihydroxyphenylacetate, respectively. Both of these compounds are used as substrate by homogentisate dioxygenase in the homogentisate pathway. The homogentisate pathway is used to catabolize phenylacetate and use it as a carbon source. Can also catalyze the hydroxylation of phenylacetate to 2-hydroxyphenylacetate at low efficiency to compensate for loss of phacA. This Emericella nidulans (Aspergillus nidulans) protein is 3-hydroxyphenylacetate 6-hydroxylase (phacB).